The following is a 691-amino-acid chain: DNA ligase (691 aa).

Residues 41–45, 90–91, and glutamate 130 each bind NAD(+); these read DAEYD and SL. Residue lysine 132 is the N6-AMP-lysine intermediate of the active site. NAD(+)-binding residues include arginine 153, glutamate 190, lysine 307, and lysine 331. Residues cysteine 425, cysteine 428, cysteine 443, and cysteine 449 each contribute to the Zn(2+) site. The region spanning 610–691 is the BRCT domain; the sequence is APQGVLAGKT…MHKLLEGHAR (82 aa).

The protein belongs to the NAD-dependent DNA ligase family. LigA subfamily. It depends on Mg(2+) as a cofactor. Requires Mn(2+) as cofactor.

It carries out the reaction NAD(+) + (deoxyribonucleotide)n-3'-hydroxyl + 5'-phospho-(deoxyribonucleotide)m = (deoxyribonucleotide)n+m + AMP + beta-nicotinamide D-nucleotide.. DNA ligase that catalyzes the formation of phosphodiester linkages between 5'-phosphoryl and 3'-hydroxyl groups in double-stranded DNA using NAD as a coenzyme and as the energy source for the reaction. It is essential for DNA replication and repair of damaged DNA. The protein is DNA ligase of Burkholderia thailandensis (strain ATCC 700388 / DSM 13276 / CCUG 48851 / CIP 106301 / E264).